We begin with the raw amino-acid sequence, 163 residues long: Lipoprotein signal peptidase (163 aa).

4 helical membrane-spanning segments follow: residues 9–29, 42–62, 67–87, and 93–113; these read AWPWLWLSVLVILLDQLSKYL, ILPFLNFTLNYNTGAAFSFLG, WQIIFFAAISFVVSIFLILWL, and SEIMMSLGLSLIIGGALGNFI. Catalysis depends on residues Asp123 and Asp141. Residues 137–157 form a helical membrane-spanning segment; that stretch reads FNVADSAICVGVFLLIVYMLL.

Belongs to the peptidase A8 family.

Its subcellular location is the cell inner membrane. The catalysed reaction is Release of signal peptides from bacterial membrane prolipoproteins. Hydrolyzes -Xaa-Yaa-Zaa-|-(S,diacylglyceryl)Cys-, in which Xaa is hydrophobic (preferably Leu), and Yaa (Ala or Ser) and Zaa (Gly or Ala) have small, neutral side chains.. It participates in protein modification; lipoprotein biosynthesis (signal peptide cleavage). This protein specifically catalyzes the removal of signal peptides from prolipoproteins. In Coxiella burnetii (strain Dugway 5J108-111), this protein is Lipoprotein signal peptidase.